Reading from the N-terminus, the 400-residue chain is Cartilage-associated protein (400 aa).

The first 25 residues, 1-25, serve as a signal peptide directing secretion; sequence MGPRSPTAALLVLLCVGCAPTPGRG. 2 N-linked (GlcNAc...) asparagine glycosylation sites follow: asparagine 86 and asparagine 362.

It belongs to the leprecan family. In terms of tissue distribution, found in articular chondrocytes. Expressed in a variety of tissues.

Its subcellular location is the secreted. It is found in the extracellular space. The protein resides in the extracellular matrix. Necessary for efficient 3-hydroxylation of fibrillar collagen prolyl residues. The polypeptide is Cartilage-associated protein (Crtap) (Mus musculus (Mouse)).